The primary structure comprises 247 residues: Dof zinc finger protein DOF3.5 (247 aa).

A Dof-type zinc finger spans residues 25–79 (PSCPRCGSSNTKFCYYNNYSLTQPRYFCKGCRRYWTKGGSLRNVPVGGGCRKSRR). Residues Cys27, Cys30, Cys52, and Cys55 each contribute to the Zn(2+) site. Positions 70–100 (VGGGCRKSRRPKSSSGNNTKTSLTANSGNPG) are disordered. Residues 82-94 (SSSGNNTKTSLTA) are compositionally biased toward polar residues.

Its subcellular location is the nucleus. Functionally, transcription factor that binds specifically to a 5'-AA[AG]G-3' consensus core sequence. The protein is Dof zinc finger protein DOF3.5 (DOF3.5) of Arabidopsis thaliana (Mouse-ear cress).